Consider the following 240-residue polypeptide: NADPH-flavin oxidoreductase (240 aa).

Residues 11–15 (HRSIR), Ser-39, 67–69 (QAY), 128–131 (YIGG), and 167–169 (KPR) each bind FMN.

It belongs to the flavin oxidoreductase frp family. As to quaternary structure, homodimer.

It catalyses the reaction FMNH2 + NADP(+) = FMN + NADPH + 2 H(+). Catalyzes the NADPH-dependent reduction of FMN to FMNH(2). Involved in bioluminescence by providing FMNH(2) to luciferase. This chain is NADPH-flavin oxidoreductase, found in Vibrio harveyi (Beneckea harveyi).